Reading from the N-terminus, the 206-residue chain is Glycerol-3-phosphate acyltransferase (206 aa).

Transmembrane regions (helical) follow at residues 3–23, 47–67, 79–99, 119–139, and 152–172; these read LSLI…VIIG, VLGP…GTLA, HSLV…SIFL, PLFF…TSMV, and ILSF…VLIF.

Belongs to the PlsY family. In terms of assembly, probably interacts with PlsX.

It localises to the cell membrane. The enzyme catalyses an acyl phosphate + sn-glycerol 3-phosphate = a 1-acyl-sn-glycero-3-phosphate + phosphate. It participates in lipid metabolism; phospholipid metabolism. Catalyzes the transfer of an acyl group from acyl-phosphate (acyl-PO(4)) to glycerol-3-phosphate (G3P) to form lysophosphatidic acid (LPA). This enzyme utilizes acyl-phosphate as fatty acyl donor, but not acyl-CoA or acyl-ACP. This Latilactobacillus sakei subsp. sakei (strain 23K) (Lactobacillus sakei subsp. sakei) protein is Glycerol-3-phosphate acyltransferase.